The primary structure comprises 644 residues: DNA gyrase subunit B (644 aa).

One can recognise a Toprim domain in the interval 429 to 543 (CEIFLVEGDS…AGYVYIAQPP (115 aa)). The Mg(2+) site is built by Glu435, Asp508, and Asp510.

It belongs to the type II topoisomerase GyrB family. As to quaternary structure, heterotetramer, composed of two GyrA and two GyrB chains. In the heterotetramer, GyrA contains the active site tyrosine that forms a transient covalent intermediate with DNA, while GyrB binds cofactors and catalyzes ATP hydrolysis. Mg(2+) serves as cofactor. The cofactor is Mn(2+). Requires Ca(2+) as cofactor.

Its subcellular location is the cytoplasm. The enzyme catalyses ATP-dependent breakage, passage and rejoining of double-stranded DNA.. Functionally, a type II topoisomerase that negatively supercoils closed circular double-stranded (ds) DNA in an ATP-dependent manner to modulate DNA topology and maintain chromosomes in an underwound state. Negative supercoiling favors strand separation, and DNA replication, transcription, recombination and repair, all of which involve strand separation. Also able to catalyze the interconversion of other topological isomers of dsDNA rings, including catenanes and knotted rings. Type II topoisomerases break and join 2 DNA strands simultaneously in an ATP-dependent manner. The chain is DNA gyrase subunit B from Staphylococcus aureus (strain Mu50 / ATCC 700699).